Here is a 925-residue protein sequence, read N- to C-terminus: Glutamate receptor 3.1 (925 aa).

The N-terminal stretch at 1–25 is a signal peptide; the sequence is MLSSMNWVLLSFIIVLGGGLLLSEG. The Extracellular portion of the chain corresponds to 26–591; the sequence is ASSSRPPVIK…NPWAFLRPFT (566 aa). N-linked (GlcNAc...) asparagine glycosylation is found at Asn309, Asn341, Asn359, Asn419, Asn437, and Asn488. A helical transmembrane segment spans residues 592–612; sequence LPMWAVTASFFVIVGAAIWIL. At 613–621 the chain is on the cytoplasmic side; that stretch reads EHRINDEFR. A helical membrane pass occupies residues 622–642; the sequence is GPPRRQIITILWFTFSTMFFS. At 643 to 653 the chain is on the cytoplasmic side; that stretch reads HRETTVSTLGR. A helical membrane pass occupies residues 654–674; sequence MVLLIWLFVVLIITSSYTASL. The Extracellular segment spans residues 675-831; it reads TSILTVQQLN…GDSEQLNVHS (157 aa). 2 N-linked (GlcNAc...) asparagine glycosylation sites follow: Asn738 and Asn812. Residues 832–852 traverse the membrane as a helical segment; that stretch reads FWGMFLVVGIACLVALFIHFF. Residues 853–925 lie on the Cytoplasmic side of the membrane; that stretch reads KIIRDFCKDT…ISRTASRRPI (73 aa). The tract at residues 897 to 925 is disordered; sequence KRRLKRKRNNDHSMNANSIISRTASRRPI. The span at 908-919 shows a compositional bias: polar residues; that stretch reads HSMNANSIISRT.

Belongs to the glutamate-gated ion channel (TC 1.A.10.1) family. May form heteromers. As to expression, expressed predominantly in roots. Firt detected in the vascular tissues of the cotyledons, and later in the vasculature of all organs. In leaves, preferentially expressed in guard cells.

The protein resides in the membrane. In terms of biological role, glutamate-gated receptor that probably acts as a non-selective cation channel. May be involved in light-signal transduction and calcium homeostasis via the regulation of calcium influx into cells. Required for the long-term calcium oscillation-regulated stomatal movements. The sequence is that of Glutamate receptor 3.1 (GLR3.1) from Arabidopsis thaliana (Mouse-ear cress).